Consider the following 189-residue polypeptide: EIHFTRTTHGIMANITHFCSRTKSRTWGKDGWQKIVVCIIADGRQKVHPRTLNALAAMGVYQDGIAKNIVNQKPVNAHVYEYTTQVSLDPDLKFKGAEKGIMPCQIIFCLKERNEKKLNSHRWFFNAFGRALTPNVCILLDVGTKPGPTALYHLWKAFDQDSNVAGAAGEIKAGKGKGWLGLFNPLVAS.

It belongs to the chitin synthase family. Class II subfamily.

The protein localises to the cell membrane. It catalyses the reaction [(1-&gt;4)-N-acetyl-beta-D-glucosaminyl](n) + UDP-N-acetyl-alpha-D-glucosamine = [(1-&gt;4)-N-acetyl-beta-D-glucosaminyl](n+1) + UDP + H(+). In terms of biological role, polymerizes chitin, a structural polymer of the cell wall and septum, by transferring the sugar moiety of UDP-GlcNAc to the non-reducing end of the growing chitin polymer. The protein is Chitin synthase 3 (CHS3) of Ajellomyces capsulatus (Darling's disease fungus).